Here is a 254-residue protein sequence, read N- to C-terminus: Hemin import ATP-binding protein HmuV (254 aa).

The ABC transporter domain maps to 2-239; the sequence is LNINQVNINL…DTLSQVWHYD (238 aa). 34–41 contacts ATP; sequence GPNGAGKS.

Belongs to the ABC transporter superfamily. Heme (hemin) importer (TC 3.A.1.14.5) family. As to quaternary structure, the complex is composed of two ATP-binding proteins (HmuV), two transmembrane proteins (HmuU) and a solute-binding protein (HmuT).

It is found in the cell inner membrane. Part of the ABC transporter complex HmuTUV involved in hemin import. Responsible for energy coupling to the transport system. The polypeptide is Hemin import ATP-binding protein HmuV (Shewanella denitrificans (strain OS217 / ATCC BAA-1090 / DSM 15013)).